A 521-amino-acid chain; its full sequence is 4-cresol dehydrogenase [hydroxylating] flavoprotein subunit (521 aa).

Residues 54–268 (AAHAPSAAVT…VEIVDALRPL (215 aa)) form the FAD-binding PCMH-type domain. Tyr-384 is modified (O-8alpha-FAD tyrosine).

As to quaternary structure, tetramer of two cytochrome subunits and two flavoprotein subunits. It depends on FAD as a cofactor.

It catalyses the reaction 4-methylphenol + 4 oxidized [azurin] + H2O = 4 reduced [azurin] + 4-hydroxybenzaldehyde + 4 H(+). It functions in the pathway aromatic compound metabolism; p-cresol degradation. Its function is as follows. Catalyzes the azurin dependent hydroxylation of the methyl group of 4-methylphenol to form 4-hydroxybenzaldehyde. This is 4-cresol dehydrogenase [hydroxylating] flavoprotein subunit (pchF) from Pseudomonas putida (Arthrobacter siderocapsulatus).